Reading from the N-terminus, the 126-residue chain is DNA-directed RNA polymerase I subunit RPA12 (126 aa).

6 residues coordinate Zn(2+): cysteine 20, cysteine 23, cysteine 38, cysteine 41, cysteine 87, and cysteine 90. The C4-type zinc finger occupies 20–41 (CSDCGSVLPLPGAQDTVTCIRC). A TFIIS-type zinc finger spans residues 83–123 (VDRRCPRCGHEGMAYHTRQMRSADEGQTVFYTCTNCKFQEK). Residues 106–107 (DE) carry the Hairpin motif. The Zn(2+) site is built by cysteine 115 and cysteine 118.

Belongs to the archaeal RpoM/eukaryotic RPA12/RPB9/RPC11 RNA polymerase family. As to quaternary structure, component of the RNA polymerase I (Pol I) complex consisting of 13 subunits: a ten-subunit catalytic core composed of POLR1A/RPA1, POLR1B/RPA2, POLR1C/RPAC1, POLR1D/RPAC2, POLR1H/RPA12, POLR2E/RPABC1, POLR2F/RPABC2, POLR2H/RPABC3, POLR2K/RPABC4 and POLR2L/RPABC5; a mobile stalk subunit POLR1F/RPA43 protruding from the core and additional subunits homologous to general transcription factors POLR1E/RPA49 and POLR1G/RPA34. Part of Pol I pre-initiation complex (PIC), in which Pol I core assembles with RRN3 and promoter-bound UTBF and SL1/TIF-IB complex.

It is found in the nucleus. It localises to the nucleolus. Functionally, core component of RNA polymerase I (Pol I), a DNA-dependent RNA polymerase which synthesizes ribosomal RNA precursors using the four ribonucleoside triphosphates as substrates. Can mediate Pol I proofreading of the nascent RNA transcript. Anchors into the Pol I active site to monitor transcription fidelity and cleave mis-incorporated 5'-ribonucleotides. The polypeptide is DNA-directed RNA polymerase I subunit RPA12 (Homo sapiens (Human)).